Here is an 807-residue protein sequence, read N- to C-terminus: MESVEKKDSLTAPSEFATTASTDAANAPTTFPVEAPPLEEEEVIIEQDPGFVSEDDEDRSVPTEDKKQDQDNAEANEEQVGRGDERHGDYLDVGDDVLLKHLQRQCAIICDALQERSDVPLAIADVSLAYERHLFSPRVPPKRQENGTCEPNPRLNFYPVFAVPEVLATYHIFFQNCKIPLSCRANRSRADKQLALRQGAVIPDIASLNEVPKIFEGLGRDEKRAANALQQENSENESHSGVLVELEGDNARLAVLKRSIEVTHFAYPALNLPPKVMSTVMSELIVRRAQPLERDANLQEQTEEGLPAVGDEQLARWLQTREPADLEERRKLMMAAVLVTVELECMQRFFADPEMQRKLEETLHYTFRQGYVRQACKISNVELCNLVSYLGILHENRLGQNVLHSTLKGEARRDYVRDCVYLFLCYTWQTAMGVWQQCLEECNLKELQKLLKQNLKDLWTAFNERSVAAHLADIIFPERLLKTLQQGLPDFTSQSMLQNFRNFILERSGILPATCCALPSDFVPIKYRECPPPLWGHCYLLQLANYLAYHSDIMEDVSGDGLLECHCRCNLCTPHRSLVCNSQLLNESQIIGTFELQGPSPDEKSAAPGLKLTPGLWTSAYLRKFVPEDYHAHEIRFYEDQSRPPNAELTACVITQGHILGQLQAINKARQEFLLRKGRGVYLDPQSGEELNPIPPPPQPYQQQPRALASQDGTQKEAAAAAATHGRGGILGQSGRGGFGRGGGGHDGRLGEPRRGSFRGRRGVRRNTVTLGRIPLAGAPEIGNRFQHGYNLRSSGAAGTARSPTQP.

The disordered stretch occupies residues 1-88; sequence MESVEKKDSL…QVGRGDERHG (88 aa). The segment covering 16–29 has biased composition (polar residues); sequence FATTASTDAANAPT. Basic and acidic residues-rich tracts occupy residues 59–70 and 79–88; these read RSVPTEDKKQDQ and QVGRGDERHG. The binding to host EIF4G stretch occupies residues 280 to 345; it reads VMSELIVRRA…AVLVTVELEC (66 aa). The RRM domain occupies 348-466; sequence RFFADPEMQR…DLWTAFNERS (119 aa). Residues Tyr365 and Tyr682 each carry the phosphotyrosine; by host modification. The interval 684-807 is disordered; the sequence is DPQSGEELNP…AGTARSPTQP (124 aa). Residues 726–743 are compositionally biased toward gly residues; it reads GRGGILGQSGRGGFGRGG. Basic and acidic residues predominate over residues 744–755; sequence GGHDGRLGEPRR. The segment covering 756–765 has biased composition (basic residues); sequence GSFRGRRGVR.

Belongs to the adenoviridae shutoff protein family. As to quaternary structure, monomer. Interacts with hexon protein; this interaction allows chaperoning and trimerization of hexon proteins. Interacts (via N-terminus) with host initiation factor EIF4G (via C-terminus). Interacts (via RRM domain) with viral mRNAs that contain the tripartite leader; this interaction allows ribosome shunting and expression of viral late mRNAs. In terms of processing, might be cleaved by the viral protease. Post-translationally, phosphorylated. Tyrosine phosphorylation enhances preferential binding to tripartite leader mRNAs and allows ribosome shunting. Methylated. Asymmetric dimethylation by host PRMT1 of the Arg/Gly-rich region may regulate shutoff protein binding to hexon and promote the capsid assembly in the nucleus.

It localises to the host cytoplasm. Its function is as follows. Protein that inhibits host translation while promoting late viral translation by ribosome shunting. Blocks host cap-dependent translation by binding to eIF4G, displacing MKNK1 from cap initiation complexes and preventing EIF4E phosphorylation. Binds to the tripartite leader sequence of viral late mRNAs and recruits host eIF4G, PABPC1/poly-A binding protein and 40S ribosomes subunits on viral mRNAs, allowing ribosome shunting and efficient translation of late viral mRNAs even though conventional translation via ribosome scanning from the cap has been shut off in the host cell. During assembly, acts as a chaperone protein that helps hexon proteins assembly into trimers. The sequence is that of Shutoff protein from Homo sapiens (Human).